A 463-amino-acid chain; its full sequence is Glutamyl-tRNA reductase (463 aa).

Substrate is bound by residues 49–52 (TCNR), Ser109, 114–116 (EQQ), and Gln120. Catalysis depends on Cys50, which acts as the Nucleophile. An NADP(+)-binding site is contributed by 196-201 (GAGAMS).

The protein belongs to the glutamyl-tRNA reductase family. Homodimer.

It carries out the reaction (S)-4-amino-5-oxopentanoate + tRNA(Glu) + NADP(+) = L-glutamyl-tRNA(Glu) + NADPH + H(+). The protein operates within porphyrin-containing compound metabolism; protoporphyrin-IX biosynthesis; 5-aminolevulinate from L-glutamyl-tRNA(Glu): step 1/2. In terms of biological role, catalyzes the NADPH-dependent reduction of glutamyl-tRNA(Glu) to glutamate 1-semialdehyde (GSA). This is Glutamyl-tRNA reductase from Corynebacterium glutamicum (strain ATCC 13032 / DSM 20300 / JCM 1318 / BCRC 11384 / CCUG 27702 / LMG 3730 / NBRC 12168 / NCIMB 10025 / NRRL B-2784 / 534).